The chain runs to 70 residues: Conotoxin Lt3.4 (70 aa).

The first 24 residues, 1–24, serve as a signal peptide directing secretion; that stretch reads MLKMGVLLFTFLVLFPLAMFQLDA. A propeptide spanning residues 25-54 is cleaved from the precursor; it reads DQPVERYAENKQDLNRDERMKIMLSALRQR. Position 55 is a pyrrolidone carboxylic acid (Gln55). Intrachain disulfides connect Cys56–Cys68, Cys57–Cys66, and Cys62–Cys69.

Belongs to the conotoxin M superfamily. Expressed by the venom duct.

The protein resides in the secreted. The protein is Conotoxin Lt3.4 of Conus litteratus (Lettered cone).